A 271-amino-acid chain; its full sequence is Putative phosphoenolpyruvate synthase regulatory protein (271 aa).

152 to 159 is an ADP binding site; the sequence is GVSRCGKT.

Belongs to the pyruvate, phosphate/water dikinase regulatory protein family. PSRP subfamily.

The enzyme catalyses [pyruvate, water dikinase] + ADP = [pyruvate, water dikinase]-phosphate + AMP + H(+). The catalysed reaction is [pyruvate, water dikinase]-phosphate + phosphate + H(+) = [pyruvate, water dikinase] + diphosphate. In terms of biological role, bifunctional serine/threonine kinase and phosphorylase involved in the regulation of the phosphoenolpyruvate synthase (PEPS) by catalyzing its phosphorylation/dephosphorylation. This Legionella pneumophila (strain Corby) protein is Putative phosphoenolpyruvate synthase regulatory protein.